Here is a 258-residue protein sequence, read N- to C-terminus: UPF0246 protein YaaA (258 aa).

This sequence belongs to the UPF0246 family.

The polypeptide is UPF0246 protein YaaA (Shigella boydii serotype 18 (strain CDC 3083-94 / BS512)).